A 512-amino-acid polypeptide reads, in one-letter code: 23S rRNA (uracil(1939)-C(5))-methyltransferase RlmD (512 aa).

Residues 1 to 14 are compositionally biased toward low complexity; that stretch reads MQPTDSKTSTSDTT. The segment at 1 to 45 is disordered; the sequence is MQPTDSKTSTSDTTEQPNETQTITIPPSKKKSKPSSKTRRRLKDA. The span at 15–25 shows a compositional bias: polar residues; that stretch reads EQPNETQTITI. Basic residues predominate over residues 28–42; sequence SKKKSKPSSKTRRRL. The 73-residue stretch at 41-113 folds into the TRAM domain; the sequence is RLKDAEPLPF…TSFEEGDAVN (73 aa). Residues Cys127, Cys133, Cys136, and Cys215 each contribute to the [4Fe-4S] cluster site. 6 residues coordinate S-adenosyl-L-methionine: Gln340, Phe369, Asn374, Glu393, Asp420, and Asp441. The Nucleophile role is filled by Cys467.

This sequence belongs to the class I-like SAM-binding methyltransferase superfamily. RNA M5U methyltransferase family. RlmD subfamily.

The enzyme catalyses uridine(1939) in 23S rRNA + S-adenosyl-L-methionine = 5-methyluridine(1939) in 23S rRNA + S-adenosyl-L-homocysteine + H(+). Its function is as follows. Catalyzes the formation of 5-methyl-uridine at position 1939 (m5U1939) in 23S rRNA. The sequence is that of 23S rRNA (uracil(1939)-C(5))-methyltransferase RlmD from Psychrobacter arcticus (strain DSM 17307 / VKM B-2377 / 273-4).